The sequence spans 471 residues: Replication factor C large subunit (471 aa).

44-51 (GSPGIGKT) contacts ATP. Over residues 422–431 (RTDAAVDHSE) the composition is skewed to basic and acidic residues. Residues 422-471 (RTDAAVDHSEGAFAGAVREDNTDEDSAADETTDGDEDTGADSQRGLDEFF) form a disordered region. Over residues 442 to 460 (NTDEDSAADETTDGDEDTG) the composition is skewed to acidic residues.

Belongs to the activator 1 small subunits family. RfcL subfamily. In terms of assembly, heteromultimer composed of small subunits (RfcS) and large subunits (RfcL).

Functionally, part of the RFC clamp loader complex which loads the PCNA sliding clamp onto DNA. The sequence is that of Replication factor C large subunit from Halobacterium salinarum (strain ATCC 29341 / DSM 671 / R1).